The primary structure comprises 516 residues: MHADLAATTSREDFRLLAAEHRVVPVTRKVLADSETPLSAYRKLAANRPGTFLLESAENGRSWSRWSFIGAGAPTALTVREGQAVWLGAVPKDAPTGGDPLRALQVTLELLATADRQSEPGLPPLSGGMVGFFAYDMVRRLERLPERAVDDLCLPDMLLLLATDVAAVDHHEGTITLIANAVNWNGTDERVDWAYDDAVARLDVMTAALGQPLPSTVATFSRPEPRHRAQRTVEEYGAIVEYLVDQIAAGEAFQVVPSQRFEMDTDVDPIDVYRILRVTNPSPYMYLLQVPNSDGAVDFSIVGSSPEALVTVHEGWATTHPIAGTRWRGRTDDEDVLLEKELLADDKERAEHLMLVDLGRNDLGRVCTPGTVRVEDYSHIERYSHVMHLVSTVTGKLGEGRTALDAVTACFPAGTLSGAPKVRAMELIEEVEKTRRGLYGGVVGYLDFAGNADFAIAIRTALMRNGTAYVQAGGGVVADSNGSYEYNEARNKARAVLNAIAAAETLAAPGANRSGC.

L-tryptophan-binding positions include serine 56 and proline 283–methionine 285. Glycine 324–threonine 325 contributes to the chorismate binding site. Glutamate 351 is a Mg(2+) binding site. Residues tyrosine 439, arginine 459, glycine 473 to glycine 475, and glycine 475 contribute to the chorismate site. Glutamate 488 provides a ligand contact to Mg(2+).

The protein belongs to the anthranilate synthase component I family. Heterotetramer consisting of two non-identical subunits: a beta subunit (TrpG) and a large alpha subunit (TrpE). Mg(2+) is required as a cofactor.

The catalysed reaction is chorismate + L-glutamine = anthranilate + pyruvate + L-glutamate + H(+). It functions in the pathway amino-acid biosynthesis; L-tryptophan biosynthesis; L-tryptophan from chorismate: step 1/5. Its activity is regulated as follows. Feedback inhibited by tryptophan. In terms of biological role, part of a heterotetrameric complex that catalyzes the two-step biosynthesis of anthranilate, an intermediate in the biosynthesis of L-tryptophan. In the first step, the glutamine-binding beta subunit (TrpG) of anthranilate synthase (AS) provides the glutamine amidotransferase activity which generates ammonia as a substrate that, along with chorismate, is used in the second step, catalyzed by the large alpha subunit of AS (TrpE) to produce anthranilate. In the absence of TrpG, TrpE can synthesize anthranilate directly from chorismate and high concentrations of ammonia. This chain is Anthranilate synthase component 1 (trpE), found in Mycobacterium bovis (strain ATCC BAA-935 / AF2122/97).